We begin with the raw amino-acid sequence, 198 residues long: Protein XA-1 (198 aa).

The signal sequence occupies residues 1–18; the sequence is MFFYVLLLALMAQGWSLP. Residues 17-198 are disordered; that stretch reads LPQGKTGEDS…KHGQEQGKKH (182 aa). Pro residues predominate over residues 29-44; the sequence is FRPPSPPMGPSLPPPV. Residues 46-59 show a composition bias toward basic and acidic residues; sequence HDLHRPSGHPEEFR. The segment covering 76 to 86 has biased composition (basic residues); it reads GRPKRDLHHGK. Positions 95–104 are enriched in basic and acidic residues; it reads HTGEVLHHTD. The span at 134–145 shows a compositional bias: basic residues; sequence HGRHRRDLHHGK. The span at 181 to 198 shows a compositional bias: basic and acidic residues; it reads NSSEEKRPKHGQEQGKKH.

As to expression, expressed in the periphery of the cement gland as well as in the region of the hatching gland.

Its subcellular location is the secreted. The sequence is that of Protein XA-1 from Xenopus laevis (African clawed frog).